A 787-amino-acid polypeptide reads, in one-letter code: Protein PAT1 homolog 2 (787 aa).

Disordered stretches follow at residues 94 to 120, 134 to 221, 338 to 374, 411 to 445, and 765 to 787; these read KHLGVIGDRGSGSFSRESSTATDWTQD, EQVQ…NASP, VREHKHKSSHRSRKNRGGISQQTSDLASQKSESGLQF, LAKKSSGSRTKPQLYPSHLKDHQSRSRNSSDQQPQ, and VSESTTTRASASGGQINSEFVRG. Positions 105–120 are enriched in polar residues; that stretch reads GSFSRESSTATDWTQD. A compositionally biased stretch (low complexity) spans 142 to 153; it reads SSQPQSSPNSNS. Composition is skewed to polar residues over residues 154–171, 180–198, and 208–221; these read LYRTSSYPQQQTQLQHYS, STFTSFPSPGKRSQQSSPS, and GGSQSNFSAPNASP. Phosphoserine is present on residues Ser184 and Ser192. The segment covering 341–353 has biased composition (basic residues); it reads HKHKSSHRSRKNR. 2 stretches are compositionally biased toward polar residues: residues 355–373 and 436–445; these read GISQQTSDLASQKSESGLQ and SRNSSDQQPQ.

Activator of mRNA decapping. Involved in mRNA decay via decapping. The protein is Protein PAT1 homolog 2 of Arabidopsis thaliana (Mouse-ear cress).